A 599-amino-acid chain; its full sequence is Serine hydroxymethyltransferase 6 (599 aa).

Residues M1–P25 are disordered. K374 carries the N6-(pyridoxal phosphate)lysine modification.

It belongs to the SHMT family. As to quaternary structure, homotetramer. Requires pyridoxal 5'-phosphate as cofactor.

It is found in the cytoplasm. It catalyses the reaction (6R)-5,10-methylene-5,6,7,8-tetrahydrofolate + glycine + H2O = (6S)-5,6,7,8-tetrahydrofolate + L-serine. Its pathway is one-carbon metabolism; tetrahydrofolate interconversion. Its function is as follows. Catalyzes the interconversion of serine and glycine. The sequence is that of Serine hydroxymethyltransferase 6 (SHM6) from Arabidopsis thaliana (Mouse-ear cress).